A 210-amino-acid chain; its full sequence is Large ribosomal subunit protein uL4 (210 aa).

Positions 44–77 (ARQGNASSKTRSEVRGGGRKPWRQKGTGRARAGS) are disordered. Residues 60 to 71 (GGRKPWRQKGTG) are compositionally biased toward basic residues.

The protein belongs to the universal ribosomal protein uL4 family. Part of the 50S ribosomal subunit.

Functionally, one of the primary rRNA binding proteins, this protein initially binds near the 5'-end of the 23S rRNA. It is important during the early stages of 50S assembly. It makes multiple contacts with different domains of the 23S rRNA in the assembled 50S subunit and ribosome. Its function is as follows. Forms part of the polypeptide exit tunnel. This Microcystis aeruginosa (strain NIES-843 / IAM M-2473) protein is Large ribosomal subunit protein uL4.